The following is a 56-amino-acid chain: Ovomucoid (56 aa).

In terms of domain architecture, Kazal-like spans 6-56; it reads VDCSEYPKPACTLEYRPLCGSDNKTYGNKCNFCNAVVESNGTLTLSHFGKC. Cystine bridges form between Cys8–Cys38, Cys16–Cys35, and Cys24–Cys56. Asn45 is a glycosylation site (N-linked (GlcNAc...) asparagine).

Its subcellular location is the secreted. The protein is Ovomucoid of Meleagris ocellata (Ocellated turkey).